A 166-amino-acid polypeptide reads, in one-letter code: Protein YciF (166 aa).

In terms of assembly, homodimer.

The polypeptide is Protein YciF (yciF) (Escherichia coli (strain K12)).